A 163-amino-acid chain; its full sequence is SKP1-like protein 3 (163 aa).

Residues 105–163 (LRAANYLNISGLLDLTCKAVADQMRGKTPAQMREHFNIKNDYTPEEEAEVRNENRWAFE) are interaction with the F-box domain of F-box proteins.

This sequence belongs to the SKP1 family. Part of a SCF (SKP1-cullin-F-box) protein ligase complex. Interacts with ADO3/FKF1 and At3g61590. In terms of tissue distribution, highly expressed in siliques.

The protein resides in the nucleus. It functions in the pathway protein modification; protein ubiquitination. Its function is as follows. Involved in ubiquitination and subsequent proteasomal degradation of target proteins. Together with CUL1, RBX1 and a F-box protein, it forms a SCF E3 ubiquitin ligase complex. The functional specificity of this complex depends on the type of F-box protein. In the SCF complex, it serves as an adapter that links the F-box protein to CUL1. This chain is SKP1-like protein 3 (ASK3), found in Arabidopsis thaliana (Mouse-ear cress).